Here is a 70-residue protein sequence, read N- to C-terminus: ATP synthase subunit c (70 aa).

The next 2 helical transmembrane spans lie at 4 to 24 and 47 to 67; these read IAAG…NGLV and FLGV…AFLV.

This sequence belongs to the ATPase C chain family. F-type ATPases have 2 components, F(1) - the catalytic core - and F(0) - the membrane proton channel. F(1) has five subunits: alpha(3), beta(3), gamma(1), delta(1), epsilon(1). F(0) has three main subunits: a(1), b(2) and c(10-14). The alpha and beta chains form an alternating ring which encloses part of the gamma chain. F(1) is attached to F(0) by a central stalk formed by the gamma and epsilon chains, while a peripheral stalk is formed by the delta and b chains.

The protein localises to the cell membrane. In terms of biological role, f(1)F(0) ATP synthase produces ATP from ADP in the presence of a proton or sodium gradient. F-type ATPases consist of two structural domains, F(1) containing the extramembraneous catalytic core and F(0) containing the membrane proton channel, linked together by a central stalk and a peripheral stalk. During catalysis, ATP synthesis in the catalytic domain of F(1) is coupled via a rotary mechanism of the central stalk subunits to proton translocation. Functionally, key component of the F(0) channel; it plays a direct role in translocation across the membrane. A homomeric c-ring of between 10-14 subunits forms the central stalk rotor element with the F(1) delta and epsilon subunits. The polypeptide is ATP synthase subunit c (Limosilactobacillus fermentum (strain NBRC 3956 / LMG 18251) (Lactobacillus fermentum)).